A 288-amino-acid chain; its full sequence is Protoheme IX farnesyltransferase (288 aa).

Helical transmembrane passes span V6–L26, F44–I64, L89–I109, V111–F131, I138–V158, L169–F189, I213–I233, L238–I258, and I268–V288.

The protein belongs to the UbiA prenyltransferase family. Protoheme IX farnesyltransferase subfamily.

Its subcellular location is the cell membrane. It carries out the reaction heme b + (2E,6E)-farnesyl diphosphate + H2O = Fe(II)-heme o + diphosphate. The protein operates within porphyrin-containing compound metabolism; heme O biosynthesis; heme O from protoheme: step 1/1. In terms of biological role, converts heme B (protoheme IX) to heme O by substitution of the vinyl group on carbon 2 of heme B porphyrin ring with a hydroxyethyl farnesyl side group. This is Protoheme IX farnesyltransferase from Buchnera aphidicola subsp. Baizongia pistaciae (strain Bp).